Reading from the N-terminus, the 701-residue chain is E3 ubiquitin-protein ligase RNF19B (701 aa).

Residues 1–97 (MGSEKDSESP…PAEPLSTSQA (97 aa)) are disordered. The interval 1-304 (MGSEKDSESP…VCGCEFCWLC (304 aa)) is required for ubiquitin ligase activity and for protection against staurosporin-induced cell death. Low complexity predominate over residues 57 to 72 (QQLHQQQQIQQQQLLQ). The interval 103–323 (ELLECPLCLV…LSPSGCTFWG (221 aa)) is TRIAD supradomain. Cysteine 107, cysteine 110, cysteine 130, cysteine 133, cysteine 194, cysteine 199, cysteine 216, cysteine 221, cysteine 226, cysteine 229, histidine 234, cysteine 239, cysteine 273, and cysteine 276 together coordinate Zn(2+). The RING-type 1 zinc-finger motif lies at 107–156 (CPLCLVRQPAEQLPELQGCSHRSCLCCLRQYLRIEITESRVQLSCPECAE). The IBR-type zinc finger occupies 174-239 (EKYEEFLLRR…KQAWHPNQTC (66 aa)). An RING-type 2; atypical zinc finger spans residues 273–304 (CPRCGAYIIKMNDGSCNHMTCAVCGCEFCWLC). The active site involves cysteine 288. 6 residues coordinate Zn(2+): cysteine 293, cysteine 296, cysteine 301, cysteine 304, histidine 312, and cysteine 319. A run of 2 helical transmembrane segments spans residues 340 to 360 (LIGA…AMVI) and 396 to 416 (IITA…IMLA). Disordered regions lie at residues 472 to 495 (LEGA…PGGL) and 658 to 677 (AELT…HGAP).

The protein belongs to the RBR family. RNF19 subfamily. In terms of assembly, interacts with UBE2L3, UBE2L6 and UCKL1.

It localises to the cytoplasmic granule membrane. Its subcellular location is the endoplasmic reticulum membrane. The catalysed reaction is [E2 ubiquitin-conjugating enzyme]-S-ubiquitinyl-L-cysteine + [acceptor protein]-L-lysine = [E2 ubiquitin-conjugating enzyme]-L-cysteine + [acceptor protein]-N(6)-ubiquitinyl-L-lysine.. It functions in the pathway protein modification; protein ubiquitination. In terms of biological role, E3 ubiquitin-protein ligase which accepts ubiquitin from E2 ubiquitin-conjugating enzymes UBE2L3 and UBE2L6 in the form of a thioester and then directly transfers the ubiquitin to targeted substrates, such as UCKL1. Involved in the cytolytic activity of natural killer cells and cytotoxic T-cells. Protects against staurosporin-induced cell death. The sequence is that of E3 ubiquitin-protein ligase RNF19B (rnf19b) from Danio rerio (Zebrafish).